Consider the following 405-residue polypeptide: MADVKKVVLAYSGGLDTSVILKWLQDTYNCEVVTFTADLGQGEEVEPARAKAQAMGVKEIYIDDLREEFVRDFVFPMFRANTVYEGEYLLGTSIARPLIAKRLIEIANATGADAISHGATGKGNDQVRFELGAYALKPGVKVIAPWREWDLLSREKLMDYAEKHGIPIERHGKKKSPYSMDANLLHISYEGGVLEDTWTEHEEEMWRWSVSPENAPDQATYIELTYRNGDIVAINGVEKSPATVLADLNRIGGANGIGRLDIVENRYVGMKSRGCYETPGGTIMLKAHRAIESITLDREVAHLKDELMPKYASLIYTGYWWSPERLMLQQMIDASQVNVNGVVRLKLYKGNVTVVGRKSDDSLFDANIATFEEDGGAYNQADAAGFIKLNALRMRIAANKGRSLL.

Residues 10-18 (AYSGGLDTS) and A37 each bind ATP. The L-citrulline site is built by Y88 and S93. An ATP-binding site is contributed by G118. Residues T120, N124, and D125 each coordinate L-aspartate. N124 lines the L-citrulline pocket. The L-citrulline site is built by R128, S179, S188, E264, and Y276.

This sequence belongs to the argininosuccinate synthase family. Type 1 subfamily. Homotetramer.

The protein resides in the cytoplasm. It catalyses the reaction L-citrulline + L-aspartate + ATP = 2-(N(omega)-L-arginino)succinate + AMP + diphosphate + H(+). It participates in amino-acid biosynthesis; L-arginine biosynthesis; L-arginine from L-ornithine and carbamoyl phosphate: step 2/3. This chain is Argininosuccinate synthase, found in Pseudomonas putida (strain GB-1).